Consider the following 102-residue polypeptide: Salivary protein Salp9 (102 aa).

Positions 1–21 are cleaved as a signal peptide; that stretch reads MGLTEIMLVLVSLAFVATAAA. N26 and N87 each carry an N-linked (GlcNAc...) asparagine glycan. Residues 83–102 are disordered; that stretch reads SGVPNDTDAKIEETEEELEA.

Belongs to the salp14 family. As to expression, salivary gland (at protein level). Saliva (at protein level). Midgut.

It is found in the secreted. Functionally, salivary protein that facilitates blood feeding of adult ticks on vertebrate species. Inhibits the lectin pathway of complement system activation in the host. The protein is Salivary protein Salp9 of Ixodes scapularis (Black-legged tick).